The chain runs to 713 residues: Calpastatin (713 aa).

The segment covering methionine 1–serine 21 has biased composition (low complexity). Residues methionine 1–glycine 152 form a disordered region. The segment covering valine 47–glycine 64 has biased composition (polar residues). Serine 57 is subject to Phosphoserine. Lysine 69 is covalently cross-linked (Glycyl lysine isopeptide (Lys-Gly) (interchain with G-Cter in SUMO2)). At lysine 86 the chain carries N6-acetyllysine. The span at serine 120–glutamate 129 shows a compositional bias: polar residues. Serine 122 and serine 171 each carry phosphoserine. Threonine 173 carries the post-translational modification Phosphothreonine. The Inhibitory domain 1 repeat unit spans residues threonine 208–serine 260. The interval isoleucine 253–glutamate 402 is disordered. 2 positions are modified to phosphoserine: serine 260 and serine 281. Composition is skewed to polar residues over residues serine 275–lysine 285, glycine 294–valine 304, and glutamine 326–leucine 346. The stretch at aspartate 341–proline 393 is one Inhibitory domain 2 repeat. Basic and acidic residues-rich tracts occupy residues glutamine 351 to cysteine 365 and tyrosine 376 to lysine 387. Phosphoserine occurs at positions 401, 403, 410, and 445. Residues leucine 442–glutamine 507 form a disordered region. The segment covering threonine 448–glutamate 505 has biased composition (basic and acidic residues). One copy of the Inhibitory domain 3 repeat lies at glutamate 451–alanine 504. Phosphoserine occurs at positions 521 and 532. Residues valine 544–threonine 558 show a composition bias toward polar residues. Residues valine 544–threonine 713 form a disordered region. A phosphoserine mark is found at serine 580 and serine 582. The stretch at proline 588–lysine 641 is one Inhibitory domain 4 repeat. Basic and acidic residues-rich tracts occupy residues proline 588–glutamine 648 and serine 687–threonine 713.

The protein belongs to the protease inhibitor I27 (calpastatin) family.

Functionally, specific inhibition of calpain (calcium-dependent cysteine protease). Plays a key role in postmortem tenderization of meat and have been proposed to be involved in muscle protein degradation in living tissue. This chain is Calpastatin (Cast), found in Rattus norvegicus (Rat).